Here is a 1291-residue protein sequence, read N- to C-terminus: Period circadian protein homolog 1 (1291 aa).

Positions 1 to 134 (MSGPLEGADG…SSEQSARART (134 aa)) are disordered. Residues 1–151 (MSGPLEGADG…LRELKLRLPP (151 aa)) form an interaction with BTRC region. Low complexity predominate over residues 48–115 (NSNGSSGNES…AYSLLSASSE (68 aa)). The segment covering 116–132 (QDNPSTSGCSSEQSARA) has biased composition (polar residues). At T121 the chain carries Phosphothreonine; by CSNK1E. Residues S122 and S126 each carry the phosphoserine; by CSNK1E modification. The Nuclear export signal 1 motif lies at 138–147 (LMTALRELKL). PAS domains are found at residues 208–275 (ITSE…PSRL) and 348–414 (YEAP…KILQ). One can recognise a PAC domain in the interval 422–465 (HSPIRFCARNGEYVTMDTSWAGFVHPWSRKVAFVLGRHKVRTAP). Residues 489 to 498 (LSEQIHRLLL) carry the Nuclear export signal 2 motif. Disordered regions lie at residues 508 to 544 (GLCGVGPLMSPGPLHSPGSSSDSNGGDAEGPGPPAPV) and 647 to 698 (TKRK…KEPV). Low complexity-rich tracts occupy residues 513-533 (GPLMSPGPLHSPGSSSDSNGG) and 652-662 (ASSSSYTASSA). The tract at residues 596 to 815 (ELEVAPVPDQ…GLDTSSVAPS (220 aa)) is required for phosphorylation by CSNK1E. S661, S663, and S704 each carry phosphoserine. Disordered regions lie at residues 749–772 (GLAPGPAPSPAPSPTVAPDPTPDA), 809–873 (TSSV…PPAT), and 938–1037 (SQAP…ALSG). The segment covering 751 to 769 (APGPAPSPAPSPTVAPDPT) has biased composition (pro residues). Position 815 is a phosphoserine (S815). Positions 824–840 (IPPGRRHHCRSKAKRSR) match the Nuclear localization signal motif. A compositionally biased stretch (basic residues) spans 827–846 (GRRHHCRSKAKRSRHHHHQT). Pro residues-rich tracts occupy residues 859–873 (SPVPSSGPWPPPPAT) and 955–965 (PSLPPPPLSPP). The span at 973 to 985 (FNSRCSSPLQLNL) shows a compositional bias: polar residues. Phosphoserine is present on residues S978 and S979. Positions 981–988 (LQLNLLQL) match the Nuclear export signal 3 motif. The LXXLL motif lies at 1042–1046 (LELLL). Low complexity predominate over residues 1051–1061 (RSGTGSAASGS). 2 disordered regions span residues 1051 to 1099 (RSGT…YFGS) and 1207 to 1291 (SVQD…NSTS). Over residues 1062–1076 (LGSGLGSGSGSGSHE) the composition is skewed to gly residues. The span at 1077-1094 (GGSTSASITRSSQSSHTS) shows a compositional bias: low complexity. The interval 1148–1291 (SRDAASVLKQ…ALPAEENSTS (144 aa)) is CRY binding domain. Gly residues predominate over residues 1235–1248 (GEGGGCGVGGGGGD). Polar residues predominate over residues 1253-1267 (AQTQIGAKGSSSQDS).

In terms of assembly, homodimer. Component of the circadian core oscillator, which includes the CRY proteins, CLOCK or NPAS2, BMAL1 or BMAL2, CSNK1D and/or CSNK1E, TIMELESS, and the PER proteins. Interacts directly with TIMELESS. Interacts directly with PER2, PER3, CRY1 and CRY2. Interacts with BMAL1 and CLOCK. Interacts with GPRASP1. Interacts (phosphorylated) with BTRC and FBXW11; the interactions trigger proteasomal degradation. Interacts with NONO and SFPQ. Interacts with WDR5. Interacts with U2AF1L4 (Isoform 3). Interacts with USP2. Interacts with HNF4A. Phosphorylated on serine residues by CSNK1D, CSNK1E and probably also by CSNK1G2. Phosphorylation by CSNK1D or CSNK1E promotes nuclear location of PER proteins as well as ubiquitination and subsequent degradation. May be dephosphorylated by PP1. Post-translationally, ubiquitinated; requires phosphorylation by CSNK1E and interaction with BTRC and FBXW11. Deubiquitinated by USP2. As to expression, in brain, highest expression is observed in the SCN. Highly expressed in the pyramidal cell layer of the piriform cortex, the periventricular part of the caudate-putamen, many thalamic nuclei, and the granular layer of the cerebellar cortex. Weaker expression is detected in most area of the brain, including cortical and non cortical structures. Expression but no oscillations occurs in the glomerular and mitral cell layers of the olfactory bulb, the internal granular layer of the cerebellum, the cornu ammonis and dentate gyrus of the hippocampus, the cerebral and piriform cortices. Expressed in the renal cortex (at protein level). Also found in heart, brain, bladder, lumbar spinal cord, spleen, lung, liver, skeletal muscle and testis.

It is found in the nucleus. The protein localises to the cytoplasm. Its function is as follows. Transcriptional repressor which forms a core component of the circadian clock. The circadian clock, an internal time-keeping system, regulates various physiological processes through the generation of approximately 24 hour circadian rhythms in gene expression, which are translated into rhythms in metabolism and behavior. It is derived from the Latin roots 'circa' (about) and 'diem' (day) and acts as an important regulator of a wide array of physiological functions including metabolism, sleep, body temperature, blood pressure, endocrine, immune, cardiovascular, and renal function. Consists of two major components: the central clock, residing in the suprachiasmatic nucleus (SCN) of the brain, and the peripheral clocks that are present in nearly every tissue and organ system. Both the central and peripheral clocks can be reset by environmental cues, also known as Zeitgebers (German for 'timegivers'). The predominant Zeitgeber for the central clock is light, which is sensed by retina and signals directly to the SCN. The central clock entrains the peripheral clocks through neuronal and hormonal signals, body temperature and feeding-related cues, aligning all clocks with the external light/dark cycle. Circadian rhythms allow an organism to achieve temporal homeostasis with its environment at the molecular level by regulating gene expression to create a peak of protein expression once every 24 hours to control when a particular physiological process is most active with respect to the solar day. Transcription and translation of core clock components (CLOCK, NPAS2, BMAL1, BMAL2, PER1, PER2, PER3, CRY1 and CRY2) plays a critical role in rhythm generation, whereas delays imposed by post-translational modifications (PTMs) are important for determining the period (tau) of the rhythms (tau refers to the period of a rhythm and is the length, in time, of one complete cycle). A diurnal rhythm is synchronized with the day/night cycle, while the ultradian and infradian rhythms have a period shorter and longer than 24 hours, respectively. Disruptions in the circadian rhythms contribute to the pathology of cardiovascular diseases, cancer, metabolic syndromes and aging. A transcription/translation feedback loop (TTFL) forms the core of the molecular circadian clock mechanism. Transcription factors, CLOCK or NPAS2 and BMAL1 or BMAL2, form the positive limb of the feedback loop, act in the form of a heterodimer and activate the transcription of core clock genes and clock-controlled genes (involved in key metabolic processes), harboring E-box elements (5'-CACGTG-3') within their promoters. The core clock genes: PER1/2/3 and CRY1/2 which are transcriptional repressors form the negative limb of the feedback loop and interact with the CLOCK|NPAS2-BMAL1|BMAL2 heterodimer inhibiting its activity and thereby negatively regulating their own expression. This heterodimer also activates nuclear receptors NR1D1/2 and RORA/B/G, which form a second feedback loop and which activate and repress BMAL1 transcription, respectively. Regulates circadian target genes expression at post-transcriptional levels, but may not be required for the repression at transcriptional level. Controls PER2 protein decay. Represses CRY2 preventing its repression on CLOCK/BMAL1 target genes such as FXYD5 and SCNN1A in kidney and PPARA in liver. Besides its involvement in the maintenance of the circadian clock, has an important function in the regulation of several processes. Participates in the repression of glucocorticoid receptor NR3C1/GR-induced transcriptional activity by reducing the association of NR3C1/GR to glucocorticoid response elements (GREs) by BMAL1:CLOCK. Plays a role in the modulation of the neuroinflammatory state via the regulation of inflammatory mediators release, such as CCL2 and IL6. In spinal astrocytes, negatively regulates the MAPK14/p38 and MAPK8/JNK MAPK cascades as well as the subsequent activation of NFkappaB. Coordinately regulates the expression of multiple genes that are involved in the regulation of renal sodium reabsorption. Can act as gene expression activator in a gene and tissue specific manner, in kidney enhances WNK1 and SLC12A3 expression in collaboration with CLOCK. Modulates hair follicle cycling. Represses the CLOCK-BMAL1 induced transcription of BHLHE40/DEC1. This chain is Period circadian protein homolog 1 (Per1), found in Mus musculus (Mouse).